Reading from the N-terminus, the 545-residue chain is Chaperonin GroEL (545 aa).

ATP is bound by residues 30-33, Lys51, 87-91, Gly415, 479-481, and Asp495; these read TLGP, DGTTT, and NAA.

Belongs to the chaperonin (HSP60) family. In terms of assembly, forms a cylinder of 14 subunits composed of two heptameric rings stacked back-to-back. Interacts with the co-chaperonin GroES.

It localises to the cytoplasm. It catalyses the reaction ATP + H2O + a folded polypeptide = ADP + phosphate + an unfolded polypeptide.. In terms of biological role, together with its co-chaperonin GroES, plays an essential role in assisting protein folding. The GroEL-GroES system forms a nano-cage that allows encapsulation of the non-native substrate proteins and provides a physical environment optimized to promote and accelerate protein folding. This is Chaperonin GroEL from Salmonella agona (strain SL483).